The sequence spans 341 residues: UDP-glucose 4-epimerase (341 aa).

Belongs to the polysaccharide synthase family.

It carries out the reaction UDP-alpha-D-glucose = UDP-alpha-D-galactose. In terms of biological role, epimerizes UDP-galactose to UDP-glucose. May contribute to formation of LPS or the exopolysaccharide slime layer by providing UDP-galactose as a substrate for either molecule. In Rickettsia prowazekii (strain Madrid E), this protein is UDP-glucose 4-epimerase (capD).